A 293-amino-acid polypeptide reads, in one-letter code: Pyridoxal 5'-phosphate synthase subunit PdxS (293 aa).

D23 lines the D-ribose 5-phosphate pocket. The active-site Schiff-base intermediate with D-ribose 5-phosphate is K80. Position 152 (G152) interacts with D-ribose 5-phosphate. Residue R164 coordinates D-glyceraldehyde 3-phosphate. D-ribose 5-phosphate-binding positions include G213 and 234–235 (GS).

This sequence belongs to the PdxS/SNZ family. In terms of assembly, in the presence of PdxT, forms a dodecamer of heterodimers.

The enzyme catalyses aldehydo-D-ribose 5-phosphate + D-glyceraldehyde 3-phosphate + L-glutamine = pyridoxal 5'-phosphate + L-glutamate + phosphate + 3 H2O + H(+). It participates in cofactor biosynthesis; pyridoxal 5'-phosphate biosynthesis. Catalyzes the formation of pyridoxal 5'-phosphate from ribose 5-phosphate (RBP), glyceraldehyde 3-phosphate (G3P) and ammonia. The ammonia is provided by the PdxT subunit. Can also use ribulose 5-phosphate and dihydroxyacetone phosphate as substrates, resulting from enzyme-catalyzed isomerization of RBP and G3P, respectively. The polypeptide is Pyridoxal 5'-phosphate synthase subunit PdxS (Niallia circulans (Bacillus circulans)).